An 875-amino-acid chain; its full sequence is Leucine--tRNA ligase (875 aa).

A 'HIGH' region motif is present at residues 43 to 53 (PYPSGRIHIGH). Residues 631 to 635 (KMSKS) carry the 'KMSKS' region motif. Lysine 634 is a binding site for ATP.

It belongs to the class-I aminoacyl-tRNA synthetase family.

It is found in the cytoplasm. It catalyses the reaction tRNA(Leu) + L-leucine + ATP = L-leucyl-tRNA(Leu) + AMP + diphosphate. This is Leucine--tRNA ligase from Mesorhizobium japonicum (strain LMG 29417 / CECT 9101 / MAFF 303099) (Mesorhizobium loti (strain MAFF 303099)).